The chain runs to 121 residues: MNEKIKLVEAAQMRADIPEIHPGDTLKVHVKVVEGDKERLQLFQGILISIRGVGMSKTITVRKISHGVGVERIIPLHSPIIEKIEVVKRGKVRRAKLFYMRNRTGKAAMKIKEKTTNSEMA.

The protein belongs to the bacterial ribosomal protein bL19 family.

This protein is located at the 30S-50S ribosomal subunit interface and may play a role in the structure and function of the aminoacyl-tRNA binding site. This chain is Large ribosomal subunit protein bL19, found in Chloroherpeton thalassium (strain ATCC 35110 / GB-78).